The primary structure comprises 205 residues: Adenylate kinase (205 aa).

10-15 is an ATP binding site; the sequence is GAGKGT. Positions 30–59 are NMP; the sequence is STGDMLRAAVAQGSEVGKVAEGIMARGELV. AMP contacts are provided by residues Thr-31, Arg-36, 57-59, 85-88, and Gln-92; these read ELV and GFPR. An LID region spans residues 126–139; sequence TRAAETAGGPRADD. Arg-127 lines the ATP pocket. Positions 136 and 147 each coordinate AMP. Lys-175 serves as a coordination point for ATP.

Belongs to the adenylate kinase family. As to quaternary structure, monomer.

Its subcellular location is the cytoplasm. The catalysed reaction is AMP + ATP = 2 ADP. The protein operates within purine metabolism; AMP biosynthesis via salvage pathway; AMP from ADP: step 1/1. In terms of biological role, catalyzes the reversible transfer of the terminal phosphate group between ATP and AMP. Plays an important role in cellular energy homeostasis and in adenine nucleotide metabolism. The sequence is that of Adenylate kinase from Parvibaculum lavamentivorans (strain DS-1 / DSM 13023 / NCIMB 13966).